Consider the following 469-residue polypeptide: Glutamate--tRNA ligase 2 (469 aa).

A 'HIGH' region motif is present at residues 10–20 (PSPTGFLHIGS). The 'KMSKS' region motif lies at 239–243 (KLSKR). Lysine 242 lines the ATP pocket.

The protein belongs to the class-I aminoacyl-tRNA synthetase family. Glutamate--tRNA ligase type 1 subfamily. In terms of assembly, monomer.

Its subcellular location is the cytoplasm. It carries out the reaction tRNA(Glu) + L-glutamate + ATP = L-glutamyl-tRNA(Glu) + AMP + diphosphate. Its function is as follows. Catalyzes the attachment of glutamate to tRNA(Glu) in a two-step reaction: glutamate is first activated by ATP to form Glu-AMP and then transferred to the acceptor end of tRNA(Glu). The sequence is that of Glutamate--tRNA ligase 2 from Rickettsia typhi (strain ATCC VR-144 / Wilmington).